The sequence spans 305 residues: Glycine--tRNA ligase alpha subunit (305 aa).

Belongs to the class-II aminoacyl-tRNA synthetase family. As to quaternary structure, tetramer of two alpha and two beta subunits.

It is found in the cytoplasm. It catalyses the reaction tRNA(Gly) + glycine + ATP = glycyl-tRNA(Gly) + AMP + diphosphate. The protein is Glycine--tRNA ligase alpha subunit of Streptococcus suis (strain 98HAH33).